Here is a 387-residue protein sequence, read N- to C-terminus: Patatin-13 (387 aa).

A signal peptide spans 1–23; it reads MATTKSVLVLIFMILATTSSTFA. The 199-residue stretch at 32-230 folds into the PNPLA domain; that stretch reads LSVDGGGIKG…TVADPALLSV (199 aa). Residues 36–41 carry the GXGXXG motif; the sequence is GGGIKG. The GXSXG signature appears at 75–79; sequence GTSTG. The active-site Nucleophile is the serine 77. N-linked (GlcNAc...) asparagine glycans are attached at residues asparagine 115 and asparagine 203. Aspartate 216 (proton acceptor) is an active-site residue. The short motif at 216–218 is the DGA/G element; that stretch reads DGA. Positions 361–385 form a coiled coil; sequence ETYEEALKRFAKLLSDRKKLRANKA.

Belongs to the patatin family. Tuber.

Its subcellular location is the vacuole. Probable lipolytic acyl hydrolase (LAH), an activity which is thought to be involved in the response of tubers to pathogens. The polypeptide is Patatin-13 (Solanum tuberosum (Potato)).